We begin with the raw amino-acid sequence, 178 residues long: Caveolin-1 (178 aa).

An N-acetylserine modification is found at S2. Phosphoserine is present on S2. Residues 2-94 (SGGKYVDSEG…WKASFTTFTV (93 aa)) form a required for homooligomerization region. The Cytoplasmic portion of the chain corresponds to 2 to 104 (SGGKYVDSEG…TKYWFYRLLS (103 aa)). K5 is subject to N6-acetyllysine; alternate. Residue K5 forms a Glycyl lysine isopeptide (Lys-Gly) (interchain with G-Cter in ubiquitin); alternate linkage. Y6 carries the phosphotyrosine modification. S9 bears the Phosphoserine mark. Y14 carries the post-translational modification Phosphotyrosine; by ABL1. Y25 is modified (phosphotyrosine). Residues K26, K30, K39, K47, and K57 each participate in a glycyl lysine isopeptide (Lys-Gly) (interchain with G-Cter in ubiquitin) cross-link. The interval 82–94 (DGIWKASFTTFTV) is interaction with CAVIN3. Residues 105–125 (TIFGIPMALIWGIYFAILSFL) constitute an intramembrane region (helical). The Cytoplasmic portion of the chain corresponds to 126–178 (HIWAVVPCIKSFLIEIQCISRVYSIYVHTFCDPLFEAIGKIFSNVRISMQKEI). The interacts with SPRY1, SPRY2, SPRY3 and SPRY4 stretch occupies residues 131–142 (VPCIKSFLIEIQ). 3 S-palmitoyl cysteine lipidation sites follow: C133, C143, and C156. An interacts with SPRY1, SPRY2, and SPRY4 region spans residues 149–160 (SIYVHTFCDPLF). The interval 167-178 (FSNVRISMQKEI) is interacts with SPRY1, SPRY2, SPRY3 and SPRY4.

Belongs to the caveolin family. As to quaternary structure, homooligomer. Interacts with GLIPR2. Interacts with NOSTRIN. Interacts with SNAP25 and STX1A. Interacts (via the N-terminus) with DPP4; the interaction is direct. Interacts with CTNNB1, CDH1 and JUP. Interacts with PACSIN2; this interaction induces membrane tubulation. Interacts with SLC7A9. Interacts with BMX and BTK. Interacts with TGFBR1. Interacts with CAVIN3 (via leucine-zipper domain) in a cholesterol-sensitive manner. Interacts with CAVIN1. Interacts with EHD2 in a cholesterol-dependent manner. Forms a ternary complex with UBXN6 and VCP; mediates CAV1 targeting to lysosomes for degradation. Interacts with ABCG1; this interaction regulates ABCG1-mediated cholesterol efflux. Interacts with NEU3; this interaction enhances NEU3 sialidase activity within caveola. Interacts (via C-terminus) with SPRY1, SPRY2 (via C-terminus), SPRY3, and SPRY4. Interacts with IGFBP5; this interaction allows trafficking of IGFBP5 from the plasma membrane to the nucleus. In terms of processing, phosphorylated at Tyr-14 by ABL1 in response to oxidative stress. Post-translationally, ubiquitinated. Undergo monoubiquitination and multi- and/or polyubiquitination. Monoubiquitination of N-terminal lysines promotes integration in a ternary complex with UBXN6 and VCP which promotes oligomeric CAV1 targeting to lysosomes for degradation. Ubiquitinated by ZNRF1; leading to degradation and modulation of the TLR4-mediated immune response.

It localises to the golgi apparatus membrane. It is found in the cell membrane. The protein resides in the membrane. The protein localises to the caveola. Its subcellular location is the membrane raft. Functionally, may act as a scaffolding protein within caveolar membranes. Forms a stable heterooligomeric complex with CAV2 that targets to lipid rafts and drives caveolae formation. Mediates the recruitment of CAVIN proteins (CAVIN1/2/3/4) to the caveolae. Interacts directly with G-protein alpha subunits and can functionally regulate their activity. Involved in the costimulatory signal essential for T-cell receptor (TCR)-mediated T-cell activation. Its binding to DPP4 induces T-cell proliferation and NF-kappa-B activation in a T-cell receptor/CD3-dependent manner. Recruits CTNNB1 to caveolar membranes and may regulate CTNNB1-mediated signaling through the Wnt pathway. Negatively regulates TGFB1-mediated activation of SMAD2/3 by mediating the internalization of TGFBR1 from membrane rafts leading to its subsequent degradation. Binds 20(S)-hydroxycholesterol (20(S)-OHC). This chain is Caveolin-1 (CAV1), found in Oryctolagus cuniculus (Rabbit).